A 316-amino-acid polypeptide reads, in one-letter code: Small kinetochore-associated protein (316 aa).

Ser128 carries the post-translational modification Phosphoserine. The tract at residues 159–316 (VRKGYKPLSK…LKEMEQLLEM (158 aa)) is interaction with SPAG5. Coiled coils occupy residues 166-216 (LSKQ…FRDN) and 248-316 (SMLL…LLEM).

Part of an astrin (SPAG5)-kinastrin (SKAP) complex containing KNSTRN, SPAG5, PLK1, DYNLL1 and SGO2. Interacts with SPAG5. Directly binds to microtubules, although at relatively low affinity. Interacts with CENPE; this interaction greatly favors microtubule-binding. Interacts with DSN1/MIS13; leading to localization to kinetochores. Interacts with MAPRE1/EB1; leading to localization to the microtubule plus ends. Interacts with PRPF19. Interacts with DYNLL1. Interacts with MAP4. In terms of tissue distribution, widely expressed, including in skin.

It localises to the nucleus. It is found in the chromosome. The protein localises to the centromere. The protein resides in the kinetochore. Its subcellular location is the cytoplasm. It localises to the cytoskeleton. It is found in the spindle pole. The protein localises to the microtubule organizing center. Its function is as follows. Essential component of the mitotic spindle required for faithful chromosome segregation and progression into anaphase. Promotes the metaphase-to-anaphase transition and is required for chromosome alignment, normal timing of sister chromatid segregation, and maintenance of spindle pole architecture. The astrin (SPAG5)-kinastrin (SKAP) complex promotes stable microtubule-kinetochore attachments. Required for kinetochore oscillations and dynamics of microtubule plus-ends during live cell mitosis, possibly by forming a link between spindle microtubule plus-ends and mitotic chromosomes to achieve faithful cell division. May be involved in UV-induced apoptosis via its interaction with PRPF19; however, these results need additional evidences. This is Small kinetochore-associated protein from Homo sapiens (Human).